The following is a 130-amino-acid chain: Small ribosomal subunit protein uS11c (130 aa).

This sequence belongs to the universal ribosomal protein uS11 family. In terms of assembly, part of the 30S ribosomal subunit.

The protein localises to the plastid. Its subcellular location is the chloroplast. The chain is Small ribosomal subunit protein uS11c from Mesostigma viride (Green alga).